A 352-amino-acid polypeptide reads, in one-letter code: Large ribosomal subunit protein uL5m (352 aa).

The segment at 28-109 (STQTGAGAAA…HPIQSPPSSD (82 aa)) is disordered. Positions 63–80 (EEDKKEFRPWKRAADRKA) are enriched in basic and acidic residues.

It belongs to the universal ribosomal protein uL5 family. As to quaternary structure, component of the mitochondrial large ribosomal subunit (mt-LSU). Mature N.crassa 74S mitochondrial ribosomes consist of a small (37S) and a large (54S) subunit. The 37S small subunit contains a 16S ribosomal RNA (16S mt-rRNA) and 32 different proteins. The 54S large subunit contains a 23S rRNA (23S mt-rRNA) and 42 different proteins. Unlike bacterial L5, uL5m does not bind zinc.

It is found in the mitochondrion. Component of the mitochondrial ribosome (mitoribosome), a dedicated translation machinery responsible for the synthesis of mitochondrial genome-encoded proteins, including at least some of the essential transmembrane subunits of the mitochondrial respiratory chain. The mitoribosomes are attached to the mitochondrial inner membrane and translation products are cotranslationally integrated into the membrane. The polypeptide is Large ribosomal subunit protein uL5m (mrpl7) (Neurospora crassa (strain ATCC 24698 / 74-OR23-1A / CBS 708.71 / DSM 1257 / FGSC 987)).